The chain runs to 147 residues: Ribosome-binding factor A (147 aa).

The tract at residues 123 to 147 is disordered; sequence LAKLKEGAQPAGDANPYKTSDEEED.

Belongs to the RbfA family. As to quaternary structure, monomer. Binds 30S ribosomal subunits, but not 50S ribosomal subunits or 70S ribosomes.

It localises to the cytoplasm. One of several proteins that assist in the late maturation steps of the functional core of the 30S ribosomal subunit. Associates with free 30S ribosomal subunits (but not with 30S subunits that are part of 70S ribosomes or polysomes). Required for efficient processing of 16S rRNA. May interact with the 5'-terminal helix region of 16S rRNA. This chain is Ribosome-binding factor A, found in Corynebacterium aurimucosum (strain ATCC 700975 / DSM 44827 / CIP 107346 / CN-1) (Corynebacterium nigricans).